A 326-amino-acid chain; its full sequence is L-lactate dehydrogenase (326 aa).

Residue 39 to 60 participates in NAD(+) binding; that stretch reads DVVTGMPEGKALDDSQATSIAD. The substrate site is built by arginine 99, asparagine 131, and arginine 162. Asparagine 131 contributes to the NAD(+) binding site. The active-site Proton acceptor is histidine 186.

It belongs to the LDH/MDH superfamily. LDH family. Homotetramer.

The catalysed reaction is (S)-lactate + NAD(+) = pyruvate + NADH + H(+). The protein operates within fermentation; pyruvate fermentation to lactate; (S)-lactate from pyruvate: step 1/1. The polypeptide is L-lactate dehydrogenase (Toxoplasma gondii).